Here is a 157-residue protein sequence, read N- to C-terminus: S-ribosylhomocysteine lyase (157 aa).

Residues histidine 54, histidine 58, and cysteine 126 each contribute to the Fe cation site.

This sequence belongs to the LuxS family. As to quaternary structure, homodimer. Fe cation serves as cofactor.

It carries out the reaction S-(5-deoxy-D-ribos-5-yl)-L-homocysteine = (S)-4,5-dihydroxypentane-2,3-dione + L-homocysteine. Involved in the synthesis of autoinducer 2 (AI-2) which is secreted by bacteria and is used to communicate both the cell density and the metabolic potential of the environment. The regulation of gene expression in response to changes in cell density is called quorum sensing. Catalyzes the transformation of S-ribosylhomocysteine (RHC) to homocysteine (HC) and 4,5-dihydroxy-2,3-pentadione (DPD). This Bacillus cytotoxicus (strain DSM 22905 / CIP 110041 / 391-98 / NVH 391-98) protein is S-ribosylhomocysteine lyase.